A 1944-amino-acid polypeptide reads, in one-letter code: Anaphase-promoting complex subunit 1 (1944 aa).

Residues S51, S60, S202, and S286 each carry the phosphoserine modification. Position 291 is a phosphothreonine (T291). The disordered stretch occupies residues 305–343 (LRSLSKGDSPVTSPFQNYSSIHSQSRSTSSPSLHSRSPS). Residues S313, S341, S343, S355, S362, S373, and S377 each carry the phosphoserine modification. Positions 323–343 (SSIHSQSRSTSSPSLHSRSPS) are enriched in low complexity. The interval 373–396 (SHNQSPKRHSISHSPNSNSNGSFL) is disordered. Positions 384 to 394 (SHSPNSNSNGS) are enriched in low complexity. T537 bears the Phosphothreonine mark. Phosphoserine occurs at positions 547 and 555. The residue at position 571 (Y571) is a Phosphotyrosine. Residues S686, S688, and S916 each carry the phosphoserine modification. A disordered region spans residues 994 to 1016 (KGKSVLSSDVPSGTETEEEDDGM). Polar residues predominate over residues 998–1007 (VLSSDVPSGT). PC repeat units lie at residues 1297 to 1325 (AAGLALGMVCLGHGSNLIGMSDLNVPEQL), 1366 to 1404 (GATLALAMIYLKTNNRSIADWLRAPDTMYLLDFVKPEFL), 1467 to 1501 (GACLSLGFRFAGSENLSAFNCLHKFAKDFMTYLSA), and 1520 to 1552 (LLSLAMVMAGSGNLKVLQLCRFLHMKTGGEMNY).

This sequence belongs to the APC1 family. As to quaternary structure, the mammalian APC/C is composed at least of 14 distinct subunits ANAPC1, ANAPC2, CDC27/APC3, ANAPC4, ANAPC5, CDC16/APC6, ANAPC7, CDC23/APC8, ANAPC10, ANAPC11, CDC26/APC12, ANAPC13, ANAPC15 and ANAPC16 that assemble into a complex of at least 19 chains with a combined molecular mass of around 1.2 MDa; APC/C interacts with FZR1 and FBXO5. In terms of processing, phosphorylated. Phosphorylation on Ser-355 occurs specifically during mitosis.

The protein operates within protein modification; protein ubiquitination. Its function is as follows. Component of the anaphase promoting complex/cyclosome (APC/C), a cell cycle-regulated E3 ubiquitin ligase that controls progression through mitosis and the G1 phase of the cell cycle. The APC/C complex acts by mediating ubiquitination and subsequent degradation of target proteins: it mainly mediates the formation of 'Lys-11'-linked polyubiquitin chains and, to a lower extent, the formation of 'Lys-48'- and 'Lys-63'-linked polyubiquitin chains. The APC/C complex catalyzes assembly of branched 'Lys-11'-/'Lys-48'-linked branched ubiquitin chains on target proteins. This Homo sapiens (Human) protein is Anaphase-promoting complex subunit 1 (ANAPC1).